The sequence spans 870 residues: NEDD4-like E3 ubiquitin-protein ligase WWP2 (870 aa).

The region spanning 1–117 (MASASSSRAG…KNNGGKMENM (117 aa)) is the C2 domain. Residues 151–299 (VPNGSALTDG…QQLPAAAQAP (149 aa)) are disordered. Polar residues-rich tracts occupy residues 152–171 (PNGS…SSGT) and 200–210 (SARTTPATGEQ). Residue S211 is modified to Phosphoserine. 2 stretches are compositionally biased toward polar residues: residues 222 to 243 (VKNS…TTAT) and 263 to 272 (VTPNPNTTSL). A compositionally biased stretch (low complexity) spans 290–299 (QQLPAAAQAP). WW domains are found at residues 300–333 (DALP…RPLP), 330–363 (RPLP…RPTA), 405–437 (GPLP…DPRT), and 444–477 (PALP…DPRP). One can recognise an HECT domain in the interval 536-870 (KPYDLRRRLY…IEETEGFGQE (335 aa)). C838 serves as the catalytic Glycyl thioester intermediate.

As to quaternary structure, interacts with POU5F1, RBP1, EGR2 and SLC11A2. Interacts with SCNN1A, SCNN1B, SCNN1G, WBP1, WBP2 and ATN1. Interacts with ERBB4, NDFIP1 and NDFIP2. Interacts with ARRDC4. Interacts (via WW domains) with ARRDC1 (via PPxY motifs); ubiquitinates ARRDC1. Interacts (via WW domains) with ARRDC2 and ARRDC3. (Microbial infection) Interacts with adenovirus type 2 PIII. Autoubiquitinated. Ubiquitinated by the SCF(FBXL15) complex, leading to its degradation by the proteasome. As to expression, detected in heart, throughout the brain, placenta, lung, liver, muscle, kidney and pancreas. Also detected in spleen and peripheral blood leukocytes.

The protein localises to the nucleus. The catalysed reaction is S-ubiquitinyl-[E2 ubiquitin-conjugating enzyme]-L-cysteine + [acceptor protein]-L-lysine = [E2 ubiquitin-conjugating enzyme]-L-cysteine + N(6)-ubiquitinyl-[acceptor protein]-L-lysine.. The protein operates within protein modification; protein ubiquitination. With respect to regulation, activated by NDFIP1- and NDFIP2-binding. In terms of biological role, E3 ubiquitin-protein ligase which accepts ubiquitin from an E2 ubiquitin-conjugating enzyme in the form of a thioester and then directly transfers the ubiquitin to targeted substrates. Polyubiquitinates POU5F1 by 'Lys-63'-linked conjugation and promotes it to proteasomal degradation; in embryonic stem cells (ESCs) the ubiquitination is proposed to regulate POU5F1 protein level. Ubiquitinates EGR2 and promotes it to proteasomal degradation; in T-cells the ubiquitination inhibits activation-induced cell death. Ubiquitinates SLC11A2; the ubiquitination is enhanced by presence of NDFIP1 and NDFIP2. Ubiquitinates RPB1 and promotes it to proteasomal degradation. In Homo sapiens (Human), this protein is NEDD4-like E3 ubiquitin-protein ligase WWP2 (WWP2).